The primary structure comprises 406 residues: HEAT repeat-containing taxis protein OE_2401F (406 aa).

7 HEAT repeats span residues 7-41, 42-78, 90-127, 153-184, 185-215, 216-252, and 370-406; these read LERS…NLDE, PEPE…VDAL, GATW…EDTA, IEQP…LGRL, TTEQ…LGRF, ETAE…NVPP, and VGGD…GGKT.

As to quaternary structure, interacts with chemotaxis (Che) proteins.

Its function is as follows. Involved in taxis signal transduction. Essential for the ability to control the direction of flagellar rotation. May have a role between CheY and the flagellum. This Halobacterium salinarum (strain ATCC 29341 / DSM 671 / R1) protein is HEAT repeat-containing taxis protein OE_2401F.